Consider the following 107-residue polypeptide: Essential MCU regulator, mitochondrial (107 aa).

Residues 1 to 47 (MASTAARRLAWVAVRPGALWSGPRGRRGGDVYTVPGSSGLSQVPSRS) constitute a mitochondrion transit peptide. Over 48–65 (VIVTRSGAILPKPVKMSF) the chain is Mitochondrial matrix. The chain crosses the membrane as a helical span at residues 66–85 (GLLRVFSIVIPFLYVGTLIS). The GXXXX[G/A/S] signature appears at 81–85 (GTLIS). Residues 86–107 (KNFAALLEEHDIFVPEDDDDDD) are Mitochondrial intermembrane-facing.

The protein belongs to the SMDT1/EMRE family. Component of the uniplex complex, composed of MCU, EMRE/SMDT1, MICU1 and MICU2 (or MICU3) in a 4:4:1:1 stoichiometry. The number of EMRE/SMDT1 molecules is hovewer variable, ranging from 1 to 4 copies per uniplex complex, leading to uniplex complexes with distinct gatekeeping profiles. Interacts (via its C-terminal poly-Asp tail) with MCUR1; the interaction is direct. Unprocessed form interacts (via transit peptide) with MAIP1. In terms of processing, undergoes proteolytic degradation in neurons: degraded by AFG3L2 and SPG7 before SMDT1/EMRE assembly with the uniporter complex, limiting the availability of SMDT1/EMRE for MCU assembly and promoting efficient assembly of gatekeeper subunits with MCU. In terms of tissue distribution, widely expressed.

It localises to the mitochondrion inner membrane. Essential regulatory subunit of the mitochondrial calcium uniporter complex (uniplex), a complex that mediates calcium uptake into mitochondria. Required to bridge the calcium-sensing proteins MICU1 with the calcium-conducting subunit MCU. Acts by mediating activation of MCU and retention of MICU1 to the MCU pore, in order to ensure tight regulation of the uniplex complex and appropriate responses to intracellular calcium signaling. In Mus musculus (Mouse), this protein is Essential MCU regulator, mitochondrial.